We begin with the raw amino-acid sequence, 274 residues long: 2,3,4,5-tetrahydropyridine-2,6-dicarboxylate N-succinyltransferase (274 aa).

Substrate-binding residues include Arg-103 and Asp-140.

The protein belongs to the transferase hexapeptide repeat family. As to quaternary structure, homotrimer.

Its subcellular location is the cytoplasm. It catalyses the reaction (S)-2,3,4,5-tetrahydrodipicolinate + succinyl-CoA + H2O = (S)-2-succinylamino-6-oxoheptanedioate + CoA. It functions in the pathway amino-acid biosynthesis; L-lysine biosynthesis via DAP pathway; LL-2,6-diaminopimelate from (S)-tetrahydrodipicolinate (succinylase route): step 1/3. In Actinobacillus pleuropneumoniae serotype 5b (strain L20), this protein is 2,3,4,5-tetrahydropyridine-2,6-dicarboxylate N-succinyltransferase.